The sequence spans 332 residues: Ketol-acid reductoisomerase (NADP(+)) 2 (332 aa).

A KARI N-terminal Rossmann domain is found at 2-182 (AELFYDADAD…GGTRAGVIRT (181 aa)). Residues 25 to 28 (YGSQ), S51, S53, and 83 to 86 (DPIQ) contribute to the NADP(+) site. Residue H108 is part of the active site. NADP(+) is bound at residue G134. In terms of domain architecture, KARI C-terminal knotted spans 183 to 328 (TFTEETETDL…KELRKLMSWV (146 aa)). The Mg(2+) site is built by D191, E195, E227, and E231. Substrate is bound at residue S252.

Belongs to the ketol-acid reductoisomerase family. The cofactor is Mg(2+).

It carries out the reaction (2R)-2,3-dihydroxy-3-methylbutanoate + NADP(+) = (2S)-2-acetolactate + NADPH + H(+). The enzyme catalyses (2R,3R)-2,3-dihydroxy-3-methylpentanoate + NADP(+) = (S)-2-ethyl-2-hydroxy-3-oxobutanoate + NADPH + H(+). It functions in the pathway amino-acid biosynthesis; L-isoleucine biosynthesis; L-isoleucine from 2-oxobutanoate: step 2/4. The protein operates within amino-acid biosynthesis; L-valine biosynthesis; L-valine from pyruvate: step 2/4. Its function is as follows. Involved in the biosynthesis of branched-chain amino acids (BCAA). Catalyzes an alkyl-migration followed by a ketol-acid reduction of (S)-2-acetolactate (S2AL) to yield (R)-2,3-dihydroxy-isovalerate. In the isomerase reaction, S2AL is rearranged via a Mg-dependent methyl migration to produce 3-hydroxy-3-methyl-2-ketobutyrate (HMKB). In the reductase reaction, this 2-ketoacid undergoes a metal-dependent reduction by NADPH to yield (R)-2,3-dihydroxy-isovalerate. The polypeptide is Ketol-acid reductoisomerase (NADP(+)) 2 (Streptomyces coelicolor (strain ATCC BAA-471 / A3(2) / M145)).